Reading from the N-terminus, the 93-residue chain is Alpha-defensin 16 (93 aa).

A signal peptide spans 1 to 19 (MKTLILLSALVLLAFQVQA). The propeptide occupies 20–58 (DPIQNTDEETKTEEQPGEEDQAVSVSFGDPEGTSLQEES). Residues 22-54 (IQNTDEETKTEEQPGEEDQAVSVSFGDPEGTSL) are disordered. 3 cysteine pairs are disulfide-bonded: Cys-64/Cys-92, Cys-66/Cys-81, and Cys-71/Cys-91.

This sequence belongs to the alpha-defensin family. As to expression, paneth cells of the small bowel.

Its subcellular location is the secreted. In terms of biological role, probably contributes to the antimicrobial barrier function of the small bowel mucosa. The chain is Alpha-defensin 16 (Defa16) from Mus musculus (Mouse).